A 310-amino-acid polypeptide reads, in one-letter code: tRNA uridine(34) hydroxylase (310 aa).

Residues 127–225 (KNQNTIVIDT…YLDEISKEEN (99 aa)) enclose the Rhodanese domain. Cys-185 (cysteine persulfide intermediate) is an active-site residue.

It belongs to the TrhO family.

It catalyses the reaction uridine(34) in tRNA + AH2 + O2 = 5-hydroxyuridine(34) in tRNA + A + H2O. Its function is as follows. Catalyzes oxygen-dependent 5-hydroxyuridine (ho5U) modification at position 34 in tRNAs. The polypeptide is tRNA uridine(34) hydroxylase (Prochlorococcus marinus (strain MIT 9215)).